Here is a 458-residue protein sequence, read N- to C-terminus: UPF0210 protein MJ1665 (458 aa).

This sequence belongs to the UPF0210 family.

The protein is UPF0210 protein MJ1665 of Methanocaldococcus jannaschii (strain ATCC 43067 / DSM 2661 / JAL-1 / JCM 10045 / NBRC 100440) (Methanococcus jannaschii).